Consider the following 368-residue polypeptide: tRNA-specific 2-thiouridylase MnmA (368 aa).

ATP-binding positions include 12 to 19 and Met-38; that span reads GMSGGVDS. Residues 98 to 100 form an interaction with target base in tRNA region; it reads NPD. The active-site Nucleophile is the Cys-103. An intrachain disulfide couples Cys-103 to Cys-200. Gly-128 contributes to the ATP binding site. Residues 150-152 are interaction with tRNA; sequence KDQ. Catalysis depends on Cys-200, which acts as the Cysteine persulfide intermediate. The tract at residues 313 to 314 is interaction with tRNA; it reads RY.

The protein belongs to the MnmA/TRMU family. As to quaternary structure, interacts with TusE.

The protein localises to the cytoplasm. It catalyses the reaction S-sulfanyl-L-cysteinyl-[protein] + uridine(34) in tRNA + AH2 + ATP = 2-thiouridine(34) in tRNA + L-cysteinyl-[protein] + A + AMP + diphosphate + H(+). Functionally, catalyzes the 2-thiolation of uridine at the wobble position (U34) of tRNA(Lys), tRNA(Glu) and tRNA(Gln), leading to the formation of s(2)U34, the first step of tRNA-mnm(5)s(2)U34 synthesis. Sulfur is provided by IscS, via a sulfur-relay system. Binds ATP and its substrate tRNAs. The protein is tRNA-specific 2-thiouridylase MnmA of Pectobacterium carotovorum subsp. carotovorum (strain PC1).